Consider the following 425-residue polypeptide: Enolase (425 aa).

Gln-162 is a binding site for (2R)-2-phosphoglycerate. Residue Glu-204 is the Proton donor of the active site. 3 residues coordinate Mg(2+): Asp-241, Glu-282, and Asp-309. (2R)-2-phosphoglycerate is bound by residues Lys-334, Arg-363, Ser-364, and Lys-385. Lys-334 functions as the Proton acceptor in the catalytic mechanism.

The protein belongs to the enolase family. Requires Mg(2+) as cofactor.

The protein localises to the cytoplasm. It localises to the secreted. The protein resides in the cell surface. It carries out the reaction (2R)-2-phosphoglycerate = phosphoenolpyruvate + H2O. The protein operates within carbohydrate degradation; glycolysis; pyruvate from D-glyceraldehyde 3-phosphate: step 4/5. Functionally, catalyzes the reversible conversion of 2-phosphoglycerate (2-PG) into phosphoenolpyruvate (PEP). It is essential for the degradation of carbohydrates via glycolysis. This Corynebacterium urealyticum (strain ATCC 43042 / DSM 7109) protein is Enolase.